We begin with the raw amino-acid sequence, 302 residues long: Probable alpha-L-glutamate ligase (302 aa).

One can recognise an ATP-grasp domain in the interval 104–287 (LQLLSRKGLG…IAGQIIEYIE (184 aa)). Residues Lys-141, 178–179 (EY), Asp-187, and 211–213 (RSN) contribute to the ATP site. Mg(2+) contacts are provided by Asp-248, Glu-260, and Asn-262. The Mn(2+) site is built by Asp-248, Glu-260, and Asn-262.

It belongs to the RimK family. It depends on Mg(2+) as a cofactor. The cofactor is Mn(2+).

The protein is Probable alpha-L-glutamate ligase of Chromohalobacter salexigens (strain ATCC BAA-138 / DSM 3043 / CIP 106854 / NCIMB 13768 / 1H11).